The sequence spans 457 residues: UDP-N-acetylglucosamine 1-carboxyvinyltransferase (457 aa).

34–35 (KN) contacts phosphoenolpyruvate. Residue R104 participates in UDP-N-acetyl-alpha-D-glucosamine binding. C128 (proton donor) is an active-site residue. C128 carries the post-translational modification 2-(S-cysteinyl)pyruvic acid O-phosphothioketal. Residues D319 and I341 each coordinate UDP-N-acetyl-alpha-D-glucosamine. The tract at residues 436 to 457 (INKSKNRSSNSKLKEVSEIRAA) is disordered. A compositionally biased stretch (basic and acidic residues) spans 447-457 (KLKEVSEIRAA).

It belongs to the EPSP synthase family. MurA subfamily.

The protein resides in the cytoplasm. It carries out the reaction phosphoenolpyruvate + UDP-N-acetyl-alpha-D-glucosamine = UDP-N-acetyl-3-O-(1-carboxyvinyl)-alpha-D-glucosamine + phosphate. It participates in cell wall biogenesis; peptidoglycan biosynthesis. Its function is as follows. Cell wall formation. Adds enolpyruvyl to UDP-N-acetylglucosamine. The sequence is that of UDP-N-acetylglucosamine 1-carboxyvinyltransferase from Prochlorococcus marinus subsp. pastoris (strain CCMP1986 / NIES-2087 / MED4).